The sequence spans 319 residues: Beta-ketoacyl-[acyl-carrier-protein] synthase III (319 aa).

Catalysis depends on residues cysteine 112 and histidine 246. Residues 247-251 (QANKR) form an ACP-binding region. Asparagine 276 is a catalytic residue.

This sequence belongs to the thiolase-like superfamily. FabH family. In terms of assembly, homodimer.

It localises to the cytoplasm. It carries out the reaction malonyl-[ACP] + acetyl-CoA + H(+) = 3-oxobutanoyl-[ACP] + CO2 + CoA. The protein operates within lipid metabolism; fatty acid biosynthesis. Its function is as follows. Catalyzes the condensation reaction of fatty acid synthesis by the addition to an acyl acceptor of two carbons from malonyl-ACP. Catalyzes the first condensation reaction which initiates fatty acid synthesis and may therefore play a role in governing the total rate of fatty acid production. Possesses both acetoacetyl-ACP synthase and acetyl transacylase activities. Its substrate specificity determines the biosynthesis of branched-chain and/or straight-chain of fatty acids. The sequence is that of Beta-ketoacyl-[acyl-carrier-protein] synthase III from Psychromonas ingrahamii (strain DSM 17664 / CCUG 51855 / 37).